Consider the following 331-residue polypeptide: PTS-dependent dihydroxyacetone kinase 2, dihydroxyacetone-binding subunit DhaK (331 aa).

In terms of domain architecture, DhaK spans 7–328 (DGYEAVEEML…LDTPCDTPYF (322 aa)). Residues 55 to 58 (GSGH) and D111 contribute to the dihydroxyacetone site. H58 acts as the Proton acceptor in catalysis. Residue H218 is the Tele-hemiaminal-histidine intermediate of the active site.

Homodimer. The dihydroxyacetone kinase complex is composed of a homodimer of DhaM, a homodimer of DhaK and the subunit DhaL.

The protein localises to the cytoplasm. It catalyses the reaction dihydroxyacetone + phosphoenolpyruvate = dihydroxyacetone phosphate + pyruvate. It functions in the pathway polyol metabolism; glycerol degradation. Its function is as follows. Dihydroxyacetone binding subunit of the dihydroxyacetone kinase, which is responsible for the phosphoenolpyruvate (PEP)-dependent phosphorylation of dihydroxyacetone via a phosphoryl group transfer from DhaL-ATP. This is PTS-dependent dihydroxyacetone kinase 2, dihydroxyacetone-binding subunit DhaK from Listeria innocua serovar 6a (strain ATCC BAA-680 / CLIP 11262).